The primary structure comprises 144 residues: D-aminoacyl-tRNA deacylase (144 aa).

A Gly-cisPro motif, important for rejection of L-amino acids motif is present at residues 136-137; sequence GP.

It belongs to the DTD family. As to quaternary structure, homodimer.

Its subcellular location is the cytoplasm. It catalyses the reaction glycyl-tRNA(Ala) + H2O = tRNA(Ala) + glycine + H(+). It carries out the reaction a D-aminoacyl-tRNA + H2O = a tRNA + a D-alpha-amino acid + H(+). In terms of biological role, an aminoacyl-tRNA editing enzyme that deacylates mischarged D-aminoacyl-tRNAs. Also deacylates mischarged glycyl-tRNA(Ala), protecting cells against glycine mischarging by AlaRS. Acts via tRNA-based rather than protein-based catalysis; rejects L-amino acids rather than detecting D-amino acids in the active site. By recycling D-aminoacyl-tRNA to D-amino acids and free tRNA molecules, this enzyme counteracts the toxicity associated with the formation of D-aminoacyl-tRNA entities in vivo and helps enforce protein L-homochirality. This is D-aminoacyl-tRNA deacylase from Glaesserella parasuis serovar 5 (strain SH0165) (Haemophilus parasuis).